A 103-amino-acid polypeptide reads, in one-letter code: Flagellar hook-basal body complex protein FliE (103 aa).

It belongs to the FliE family.

The protein localises to the bacterial flagellum basal body. This is Flagellar hook-basal body complex protein FliE from Yersinia enterocolitica serotype O:8 / biotype 1B (strain NCTC 13174 / 8081).